Here is a 570-residue protein sequence, read N- to C-terminus: Urease subunit alpha (570 aa).

One can recognise a Urease domain in the interval 132 to 570 (GGFDSHIHYI…LPLAQRYFLF (439 aa)). Residues H137, H139, and K220 each coordinate Ni(2+). An N6-carboxylysine modification is found at K220. H222 lines the substrate pocket. Residues H249 and H275 each coordinate Ni(2+). Residue H323 is the Proton donor of the active site. D363 provides a ligand contact to Ni(2+).

It belongs to the metallo-dependent hydrolases superfamily. Urease alpha subunit family. As to quaternary structure, heterotrimer of UreA (gamma), UreB (beta) and UreC (alpha) subunits. Three heterotrimers associate to form the active enzyme. Ni cation serves as cofactor. Post-translationally, carboxylation allows a single lysine to coordinate two nickel ions.

The protein localises to the cytoplasm. It catalyses the reaction urea + 2 H2O + H(+) = hydrogencarbonate + 2 NH4(+). It functions in the pathway nitrogen metabolism; urea degradation; CO(2) and NH(3) from urea (urease route): step 1/1. This Ruegeria sp. (strain TM1040) (Silicibacter sp.) protein is Urease subunit alpha.